The primary structure comprises 117 residues: Large ribosomal subunit protein bL20 (117 aa).

Belongs to the bacterial ribosomal protein bL20 family.

In terms of biological role, binds directly to 23S ribosomal RNA and is necessary for the in vitro assembly process of the 50S ribosomal subunit. It is not involved in the protein synthesizing functions of that subunit. The polypeptide is Large ribosomal subunit protein bL20 (Mycoplasma mobile (strain ATCC 43663 / 163K / NCTC 11711) (Mesomycoplasma mobile)).